A 175-amino-acid polypeptide reads, in one-letter code: Bacterial proteasome activator (175 aa).

Positions 152–175 (LPPGIQVPGAQRGGATHPGTGQYL) are disordered. Residues 173-175 (QYL) carry the HbYX motif motif.

It belongs to the Bpa family. As to quaternary structure, forms a homooligomeric, either hexameric or heptameric, ring-like structure which stacks co-axially with the proteasomal alpha-rings.

In terms of biological role, interacts with the core proteasome alpha-subunit (PrcA) through its C-terminal hydrophobic-tyrosine-X motif (HbYX motif). Interaction of Bpa with the proteasome stimulates proteasomal peptidase and casein degradation activity, which suggests Bpa could play a role in the removal of non-native or damaged proteins by influencing the conformation of the proteasome complex upon interaction. This Mycolicibacterium smegmatis (strain ATCC 700084 / mc(2)155) (Mycobacterium smegmatis) protein is Bacterial proteasome activator.